A 249-amino-acid chain; its full sequence is Methyl-coenzyme M reductase I subunit gamma (249 aa).

Residue Arg120 coordinates coenzyme M.

It belongs to the methyl-coenzyme M reductase gamma subunit family. MCR is a hexamer of two alpha, two beta, and two gamma chains, forming a dimer of heterotrimers. Requires coenzyme F430 as cofactor.

It is found in the cytoplasm. It catalyses the reaction coenzyme B + methyl-coenzyme M = methane + coenzyme M-coenzyme B heterodisulfide. It participates in one-carbon metabolism; methyl-coenzyme M reduction; methane from methyl-coenzyme M: step 1/1. Component of the methyl-coenzyme M reductase (MCR) I that catalyzes the reductive cleavage of methyl-coenzyme M (CoM-S-CH3 or 2-(methylthio)ethanesulfonate) using coenzyme B (CoB or 7-mercaptoheptanoylthreonine phosphate) as reductant which results in the production of methane and the mixed heterodisulfide of CoB and CoM (CoM-S-S-CoB). This is the final step in methanogenesis. This Methanothermobacter thermautotrophicus (strain ATCC 29096 / DSM 1053 / JCM 10044 / NBRC 100330 / Delta H) (Methanobacterium thermoautotrophicum) protein is Methyl-coenzyme M reductase I subunit gamma (mcrG).